A 61-amino-acid polypeptide reads, in one-letter code: MPTPKKKTSRSKRDMRRSHDGLTAPAIAVEKKTGELVRPHRAHKGADGALYYKGKQISAAK.

Residues 1–16 (MPTPKKKTSRSKRDMR) are compositionally biased toward basic residues. The disordered stretch occupies residues 1 to 47 (MPTPKKKTSRSKRDMRRSHDGLTAPAIAVEKKTGELVRPHRAHKGAD). The span at 29 to 38 (VEKKTGELVR) shows a compositional bias: basic and acidic residues.

Belongs to the bacterial ribosomal protein bL32 family.

This is Large ribosomal subunit protein bL32 from Bdellovibrio bacteriovorus (strain ATCC 15356 / DSM 50701 / NCIMB 9529 / HD100).